The primary structure comprises 32 residues: Cytochrome b6-f complex subunit 7 (32 aa).

Residues 5-25 (FIASASISFIITLIGLTLGFA) form a helical membrane-spanning segment.

Belongs to the PetM family. In terms of assembly, the 4 large subunits of the cytochrome b6-f complex are cytochrome b6, subunit IV (17 kDa polypeptide, PetD), cytochrome f and the Rieske protein, while the 4 small subunits are PetG, PetL, PetM and PetN. The complex functions as a dimer.

It localises to the plastid. Its subcellular location is the chloroplast thylakoid membrane. Functionally, component of the cytochrome b6-f complex, which mediates electron transfer between photosystem II (PSII) and photosystem I (PSI), cyclic electron flow around PSI, and state transitions. In Guillardia theta (Cryptophyte), this protein is Cytochrome b6-f complex subunit 7.